The following is a 25-amino-acid chain: Plasticin-L1 (25 aa).

This sequence belongs to the frog skin active peptide (FSAP) family. Plasticin subfamily. In terms of tissue distribution, expressed by the skin glands.

It localises to the secreted. It is found in the target cell membrane. May play an immunomodulatory role in frog skin in response to microbial pathogens, since it increases the production of the pro-inflammatory cytokines TNF-alpha, IL-1 beta, IL-12, and IL-23 by mouse peritoneal macrophages and has no effect on the production of the anti-inflammatory cytokine IL-10. It is not known whether stimulation of cytokine production arises from a non-specific interaction of the peptide with the macrophage membrane or from interaction with a specific receptor. Shows a low activity in stimulating insulin release from rat BRIN-BD11 beta cells, and acts without loss of integrity of the plasma membrane. Shows a marked affinity for both neutral and anionic membranes models. Does not show antibacterial (E.coli and S.aureus). Does not show hemolytic activity against human erythrocytes. The chain is Plasticin-L1 from Leptodactylus laticeps (Santa Fe frog).